The following is a 104-amino-acid chain: uncharacterized protein (104 aa).

This is an uncharacterized protein from Saccharomyces cerevisiae (strain ATCC 204508 / S288c) (Baker's yeast).